Reading from the N-terminus, the 400-residue chain is Dual specificity mitogen-activated protein kinase kinase 2 (400 aa).

Methionine 1 is modified (N-acetylmethionine). A Phosphoserine modification is found at serine 23. Residues phenylalanine 72–isoleucine 369 form the Protein kinase domain. ATP-binding positions include leucine 78 to valine 86 and lysine 101. Aspartate 194 acts as the Proton acceptor in catalysis. 2 positions are modified to phosphoserine; by RAF: serine 222 and serine 226. The segment at proline 282 to methionine 310 is disordered. Phosphoserine is present on residues serine 293, serine 295, and serine 306. 2 positions are modified to phosphothreonine: threonine 394 and threonine 396.

It belongs to the protein kinase superfamily. STE Ser/Thr protein kinase family. MAP kinase kinase subfamily. Interacts with MORG1. Interacts with SGK1. Interacts with KSR1. Interacts with KSR1 and BRAF; the interaction with KSR1 mediates KSR1-BRAF dimerization. Interacts with GLS. Requires Mg(2+) as cofactor. MAPKK is itself dependent on Ser/Thr phosphorylation for activity catalyzed by MAP kinase kinase kinases (RAF or MEKK1). Phosphorylated by MAP2K1/MEK1. Expressed abundantly in the adult brain and muscle.

The protein localises to the cytoplasm. It localises to the membrane. It carries out the reaction L-seryl-[protein] + ATP = O-phospho-L-seryl-[protein] + ADP + H(+). The enzyme catalyses L-threonyl-[protein] + ATP = O-phospho-L-threonyl-[protein] + ADP + H(+). The catalysed reaction is L-tyrosyl-[protein] + ATP = O-phospho-L-tyrosyl-[protein] + ADP + H(+). In terms of biological role, catalyzes the concomitant phosphorylation of a threonine and a tyrosine residue in a Thr-Glu-Tyr sequence located in MAP kinases. Activates the ERK1 and ERK2 MAP kinases. Activates BRAF in a KSR1 or KSR2-dependent manner; by binding to KSR1 or KSR2 releases the inhibitory intramolecular interaction between KSR1 or KSR2 protein kinase and N-terminal domains which promotes KSR1 or KSR2-BRAF dimerization and BRAF activation. In Rattus norvegicus (Rat), this protein is Dual specificity mitogen-activated protein kinase kinase 2 (Map2k2).